The chain runs to 239 residues: DNA repair protein RecO (239 aa).

This sequence belongs to the RecO family.

Involved in DNA repair and RecF pathway recombination. In Cereibacter sphaeroides (strain ATCC 17029 / ATH 2.4.9) (Rhodobacter sphaeroides), this protein is DNA repair protein RecO.